The following is a 1396-amino-acid chain: DNA-directed RNA polymerase subunit beta' (1396 aa).

Zn(2+) is bound by residues Cys-73, Cys-75, Cys-88, and Cys-91. Mg(2+)-binding residues include Asp-467, Asp-469, and Asp-471. Residues Cys-817, Cys-891, Cys-898, and Cys-901 each contribute to the Zn(2+) site.

Belongs to the RNA polymerase beta' chain family. In terms of assembly, the RNAP catalytic core consists of 2 alpha, 1 beta, 1 beta' and 1 omega subunit. When a sigma factor is associated with the core the holoenzyme is formed, which can initiate transcription. The cofactor is Mg(2+). Requires Zn(2+) as cofactor.

The catalysed reaction is RNA(n) + a ribonucleoside 5'-triphosphate = RNA(n+1) + diphosphate. Functionally, DNA-dependent RNA polymerase catalyzes the transcription of DNA into RNA using the four ribonucleoside triphosphates as substrates. The sequence is that of DNA-directed RNA polymerase subunit beta' from Orientia tsutsugamushi (strain Boryong) (Rickettsia tsutsugamushi).